Here is a 60-residue protein sequence, read N- to C-terminus: Toxin 5 (60 aa).

4 disulfides stabilise this stretch: Cys-3/Cys-22, Cys-17/Cys-39, Cys-41/Cys-52, and Cys-53/Cys-58.

This sequence belongs to the three-finger toxin family. Short-chain subfamily. Type I alpha-neurotoxin sub-subfamily. In terms of tissue distribution, expressed by the venom gland.

It is found in the secreted. Functionally, binds to muscle nicotinic acetylcholine receptor (nAChR) and inhibit acetylcholine from binding to the receptor, thereby impairing neuromuscular transmission. The chain is Toxin 5 from Hydrophis schistosus (Beaked sea snake).